The following is a 478-amino-acid chain: Lysosome membrane protein 2 (478 aa).

Topologically, residues Met1 to Cys4 are cytoplasmic. Residues Cys5–Arg27 form a helical membrane-spanning segment. Residues Val28–Leu433 are Lumenal-facing. Residues Asn45, Asn68, and Asn105 are each glycosylated (N-linked (GlcNAc...) asparagine). Positions Ile155–Phe191 are important for interaction with GBA1. Asn206, Asn224, Asn249, and Asn304 each carry an N-linked (GlcNAc...) asparagine glycan. Cystine bridges form between Cys274–Cys329 and Cys312–Cys318. 3 N-linked (GlcNAc...) asparagine glycosylation sites follow: Asn325, Asn412, and Asn430. The chain crosses the membrane as a helical span at residues Ile434–Lys459. The Cytoplasmic segment spans residues Gly460–Thr478.

This sequence belongs to the CD36 family. As to quaternary structure, interacts with GBA1. In terms of assembly, (Microbial infection) Interacts with enterovirus 71 capsid proteins VP1 and VP2.

The protein resides in the lysosome membrane. Acts as a lysosomal receptor for glucosylceramidase (GBA1) targeting. In terms of biological role, (Microbial infection) Acts as a receptor for enterovirus 71. This chain is Lysosome membrane protein 2 (SCARB2), found in Homo sapiens (Human).